The primary structure comprises 415 residues: Putative serpin-Z6C (415 aa).

Residues 357-381 (GTEAAAATAVCLTFASAAPSSRRPA) are RCL.

The protein belongs to the serpin family.

Probable serine protease inhibitor. The protein is Putative serpin-Z6C of Oryza sativa subsp. japonica (Rice).